The chain runs to 374 residues: Flagellar P-ring protein 1 (374 aa).

Residues 1–26 (MVPNLMVIKKHLIGLLLILCPLSLQA) form the signal peptide.

This sequence belongs to the FlgI family. In terms of assembly, the basal body constitutes a major portion of the flagellar organelle and consists of four rings (L,P,S, and M) mounted on a central rod.

It is found in the periplasm. The protein resides in the bacterial flagellum basal body. Its function is as follows. Assembles around the rod to form the L-ring and probably protects the motor/basal body from shearing forces during rotation. The polypeptide is Flagellar P-ring protein 1 (Photobacterium profundum (strain SS9)).